Reading from the N-terminus, the 114-residue chain is uncharacterized protein (114 aa).

This is an uncharacterized protein from Acanthamoeba polyphaga (Amoeba).